The sequence spans 93 residues: Large ribosomal subunit protein uL23cz/uL23cy (93 aa).

It belongs to the universal ribosomal protein uL23 family. As to quaternary structure, part of the 50S ribosomal subunit.

The protein resides in the plastid. The protein localises to the chloroplast. Binds to 23S rRNA. In Phaseolus angularis (Azuki bean), this protein is Large ribosomal subunit protein uL23cz/uL23cy (rpl23-A).